The sequence spans 96 residues: MSETGETSEYYKQALEEYKEVQEDEDPDVWDTRISKTGCYVENLALQLCHAETGDWRQCFNEMALFRKCWEKNGNRERVSTVDVDGTTSKDSEKKK.

Residues 36 to 77 (KTGCYVENLALQLCHAETGDWRQCFNEMALFRKCWEKNGNRE) form the CHCH domain. Short sequence motifs (cx9C motif) lie at residues 39-49 (CYVENLALQLC) and 59-69 (CFNEMALFRKC). Disulfide bonds link cysteine 39–cysteine 69 and cysteine 49–cysteine 59.

This sequence belongs to the COA4 family.

The protein localises to the mitochondrion inner membrane. It localises to the mitochondrion intermembrane space. Functionally, involved in cytochrome c oxidase assembly or stability. The sequence is that of Cytochrome oxidase assembly factor 4 (COA4) from Saccharomyces cerevisiae (strain ATCC 204508 / S288c) (Baker's yeast).